A 272-amino-acid polypeptide reads, in one-letter code: Bifunctional protein FolD 2 (272 aa).

NADP(+) contacts are provided by residues 157–159 (GRS), T182, and I223.

The protein belongs to the tetrahydrofolate dehydrogenase/cyclohydrolase family. As to quaternary structure, homodimer.

The catalysed reaction is (6R)-5,10-methylene-5,6,7,8-tetrahydrofolate + NADP(+) = (6R)-5,10-methenyltetrahydrofolate + NADPH. The enzyme catalyses (6R)-5,10-methenyltetrahydrofolate + H2O = (6R)-10-formyltetrahydrofolate + H(+). The protein operates within one-carbon metabolism; tetrahydrofolate interconversion. Functionally, catalyzes the oxidation of 5,10-methylenetetrahydrofolate to 5,10-methenyltetrahydrofolate and then the hydrolysis of 5,10-methenyltetrahydrofolate to 10-formyltetrahydrofolate. The polypeptide is Bifunctional protein FolD 2 (Syntrophomonas wolfei subsp. wolfei (strain DSM 2245B / Goettingen)).